A 498-amino-acid polypeptide reads, in one-letter code: Glycerol kinase (498 aa).

Thr-14 serves as a coordination point for ADP. Residues Thr-14, Thr-15, and Ser-16 each contribute to the ATP site. Thr-14 provides a ligand contact to sn-glycerol 3-phosphate. Arg-18 serves as a coordination point for ADP. Sn-glycerol 3-phosphate contacts are provided by Arg-84, Glu-85, Tyr-136, and Asp-245. Arg-84, Glu-85, Tyr-136, Asp-245, and Gln-246 together coordinate glycerol. 2 residues coordinate ADP: Thr-267 and Gly-310. Residues Thr-267, Gly-310, Gln-314, and Gly-410 each coordinate ATP. ADP-binding residues include Gly-410 and Asn-414.

This sequence belongs to the FGGY kinase family.

The catalysed reaction is glycerol + ATP = sn-glycerol 3-phosphate + ADP + H(+). It functions in the pathway polyol metabolism; glycerol degradation via glycerol kinase pathway; sn-glycerol 3-phosphate from glycerol: step 1/1. Inhibited by fructose 1,6-bisphosphate (FBP). Its function is as follows. Key enzyme in the regulation of glycerol uptake and metabolism. Catalyzes the phosphorylation of glycerol to yield sn-glycerol 3-phosphate. This is Glycerol kinase from Rhodospirillum centenum (strain ATCC 51521 / SW).